A 391-amino-acid polypeptide reads, in one-letter code: Na(+)/H(+) antiporter NhaA 1 (391 aa).

The next 11 helical transmembrane spans lie at 25–45 (AGGI…NSPL), 56–76 (VWLG…IFFL), 98–118 (ALPG…YIAI), 128–148 (GWAI…SLLG), 157–177 (VFLA…IAFF), 180–200 (AGLN…LIVM), 208–228 (LLPY…SGVH), 264–284 (VAFA…LAGI), 297–317 (VALG…VLAI), 335–355 (GVAM…NLAF), and 364–384 (EVKV…IVLL).

This sequence belongs to the NhaA Na(+)/H(+) (TC 2.A.33) antiporter family.

The protein resides in the cell inner membrane. The enzyme catalyses Na(+)(in) + 2 H(+)(out) = Na(+)(out) + 2 H(+)(in). Its function is as follows. Na(+)/H(+) antiporter that extrudes sodium in exchange for external protons. This is Na(+)/H(+) antiporter NhaA 1 from Pseudomonas syringae pv. syringae (strain B728a).